We begin with the raw amino-acid sequence, 79 residues long: Cyclin-dependent kinases regulatory subunit 2 (79 aa).

Lysine 4 carries the post-translational modification N6-acetyllysine.

It belongs to the CKS family. Forms a homohexamer that can probably bind six kinase subunits.

Binds to the catalytic subunit of the cyclin dependent kinases and is essential for their biological function. This chain is Cyclin-dependent kinases regulatory subunit 2 (CKS2), found in Bos taurus (Bovine).